Here is a 496-residue protein sequence, read N- to C-terminus: Glycerol kinase (496 aa).

Threonine 12 is an ADP binding site. The ATP site is built by threonine 12, threonine 13, and serine 14. Threonine 12 is a sn-glycerol 3-phosphate binding site. Arginine 16 is a binding site for ADP. Sn-glycerol 3-phosphate is bound by residues arginine 82, glutamate 83, and tyrosine 134. Residues arginine 82, glutamate 83, and tyrosine 134 each contribute to the glycerol site. Histidine 230 carries the phosphohistidine; by HPr modification. Aspartate 244 is a sn-glycerol 3-phosphate binding site. Glycerol-binding residues include aspartate 244 and glutamine 245. ADP-binding residues include threonine 266 and glycine 309. ATP contacts are provided by threonine 266, glycine 309, glutamine 313, and glycine 410. Residues glycine 410 and asparagine 414 each coordinate ADP.

It belongs to the FGGY kinase family. In terms of assembly, homotetramer and homodimer (in equilibrium). In terms of processing, the phosphoenolpyruvate-dependent sugar phosphotransferase system (PTS), including enzyme I, and histidine-containing protein (HPr) are required for the phosphorylation, which leads to the activation of the enzyme.

The catalysed reaction is glycerol + ATP = sn-glycerol 3-phosphate + ADP + H(+). The protein operates within polyol metabolism; glycerol degradation via glycerol kinase pathway; sn-glycerol 3-phosphate from glycerol: step 1/1. Activated by phosphorylation and inhibited by fructose 1,6-bisphosphate (FBP). Key enzyme in the regulation of glycerol uptake and metabolism. Catalyzes the phosphorylation of glycerol to yield sn-glycerol 3-phosphate. The sequence is that of Glycerol kinase from Bacillus cereus (strain Q1).